An 883-amino-acid chain; its full sequence is DNA mismatch repair protein MutS (883 aa).

602 to 609 provides a ligand contact to ATP; it reads GPNMSGKS.

It belongs to the DNA mismatch repair MutS family.

In terms of biological role, this protein is involved in the repair of mismatches in DNA. It is possible that it carries out the mismatch recognition step. This protein has a weak ATPase activity. This Staphylococcus haemolyticus (strain JCSC1435) protein is DNA mismatch repair protein MutS.